A 500-amino-acid polypeptide reads, in one-letter code: NAD(P)H-quinone oxidoreductase chain 4, chloroplastic (500 aa).

The next 14 membrane-spanning stretches (helical) occupy residues 4-24, 31-51, 84-104, 111-129, 134-154, 167-187, 208-228, 242-262, 272-292, 305-325, 330-350, 386-406, 416-436, and 463-483; these read FPWLTIFVVLPISGGSLIFLF, VIKWYTIFICIFELLLMTYAF, GFSLGPILLTGFITTLATLAA, SRLFHFLMLAMYSGQIGLF, LLLFFIMWELELIPVYLLLSM, FILYTAGGSVFLLMGALGIAL, ALEIFFYIGFLIAFAVKSPII, HYSTCMLLAGILLKMGAYGLV, AHSIFSPWLIIVGVMQIIYAA, IAYSSVSHMGFIIIGICSISD, GAILQIISHGFIGAALFFLAG, LALPGMSGFFAELIVFFGIIT, ILITFVMAVGMILTPIYLLSM, and FVSISILLPVIGIGFYPDFVF.

The protein belongs to the complex I subunit 4 family.

The protein localises to the plastid. It localises to the chloroplast thylakoid membrane. It catalyses the reaction a plastoquinone + NADH + (n+1) H(+)(in) = a plastoquinol + NAD(+) + n H(+)(out). It carries out the reaction a plastoquinone + NADPH + (n+1) H(+)(in) = a plastoquinol + NADP(+) + n H(+)(out). The chain is NAD(P)H-quinone oxidoreductase chain 4, chloroplastic from Manihot esculenta (Cassava).